Reading from the N-terminus, the 549-residue chain is Lipase 3 (549 aa).

The first 15 residues, 1–15 (MKLALALSLIASVAA), serve as a signal peptide directing secretion. Residues Cys-75 and Cys-112 are joined by a disulfide bond. Residue Ser-224 is the Acyl-ester intermediate of the active site. Cys-283 and Cys-292 are joined by a disulfide. The N-linked (GlcNAc...) asparagine glycan is linked to Asn-329. The Charge relay system role is filled by Glu-356. N-linked (GlcNAc...) asparagine glycosylation is present at Asn-366. His-464 acts as the Charge relay system in catalysis.

Belongs to the type-B carboxylesterase/lipase family. As to quaternary structure, monomer and homodimer.

It carries out the reaction a triacylglycerol + H2O = a diacylglycerol + a fatty acid + H(+). This Diutina rugosa (Yeast) protein is Lipase 3 (LIP3).